The following is a 65-amino-acid chain: Large ribosomal subunit protein bL35 (65 aa).

A disordered region spans residues 1 to 23; the sequence is MPKIKTNRGAAKRFKKTGTGKVK. Positions 10 to 23 are enriched in basic residues; sequence AAKRFKKTGTGKVK.

This sequence belongs to the bacterial ribosomal protein bL35 family.

This chain is Large ribosomal subunit protein bL35, found in Trichlorobacter lovleyi (strain ATCC BAA-1151 / DSM 17278 / SZ) (Geobacter lovleyi).